The chain runs to 158 residues: MKLVAVTSCPTGIAHSQMAAENLLQAGERLGHDIDVEVQGAMGTQDELASDAIAEADAVIITSDTSVSRDRFDGKLVLKGTVKDGVNNAEAVVQKAVELAEAGKTGSVTFGSGDDGEDADVGADDSSDDADAAESDEPVRRGGDPEKGLFARLKKLFS.

One can recognise a PTS EIIB type-2 domain in the interval 1 to 98; that stretch reads MKLVAVTSCP…AEAVVQKAVE (98 aa). Residue cysteine 9 is the Phosphocysteine intermediate of the active site. Cysteine 9 carries the phosphocysteine; by EIIA modification. Residues 104–147 are disordered; the sequence is KTGSVTFGSGDDGEDADVGADDSSDDADAAESDEPVRRGGDPEK. The span at 114-136 shows a compositional bias: acidic residues; sequence DDGEDADVGADDSSDDADAAESD. The segment covering 137 to 147 has biased composition (basic and acidic residues); sequence EPVRRGGDPEK.

It localises to the cytoplasm. It carries out the reaction D-fructose(out) + N(pros)-phospho-L-histidyl-[protein] = D-fructose 1-phosphate(in) + L-histidyl-[protein]. In terms of biological role, the phosphoenolpyruvate-dependent sugar phosphotransferase system (sugar PTS), a major carbohydrate active transport system, catalyzes the phosphorylation of incoming sugar substrates concomitantly with their translocation across the cell membrane. The enzyme II PtfABC PTS system is involved in fructose transport. This is PTS system fructose-specific EIIB component from Haloferax volcanii (strain ATCC 29605 / DSM 3757 / JCM 8879 / NBRC 14742 / NCIMB 2012 / VKM B-1768 / DS2) (Halobacterium volcanii).